A 315-amino-acid polypeptide reads, in one-letter code: Shiga toxin subunit A (315 aa).

An N-terminal signal peptide occupies residues 1–22; the sequence is MKIIIFRVLTFFFVIFSVNVVA. Positions 23 to 273 are A1; that stretch reads KEFTLDFSTA…CHHHASRVAR (251 aa). Glu189 is an active-site residue. Cys264 and Cys283 are joined by a disulfide. Residues 274–315 form an A2 region; sequence MASDEFPSMCPADGRVRGITHNKILWDSSTLGAILMRRTISS.

The protein belongs to the ribosome-inactivating protein family. Shiga toxin contains a single subunit A and five copies of subunit B.

It carries out the reaction Endohydrolysis of the N-glycosidic bond at one specific adenosine on the 28S rRNA.. Its function is as follows. The A subunit is responsible for inhibiting protein synthesis through the catalytic inactivation of 60S ribosomal subunits. After endocytosis, the A subunit is cleaved by furin in two fragments, A1 and A2: A1 is the catalytically active fragment, and A2 is essential for holotoxin assembly with the B subunits. This chain is Shiga toxin subunit A (stxA), found in Shigella sonnei (Shigella sonnei bacteriophage 7888).